The chain runs to 402 residues: APO protein 3, mitochondrial (402 aa).

Residues 1 to 13 (MQRRKLVEISIFV) constitute a mitochondrion transit peptide. The tract at residues 37–59 (NDEDPLYADVPKPPKDKSERKPY) is disordered. Residues 48–58 (KPPKDKSERKP) show a composition bias toward basic and acidic residues. APO domains are found at residues 127 to 213 (RCRL…DLEK) and 294 to 380 (TCGY…PVPD).

Belongs to the APO family.

It is found in the mitochondrion. Its function is as follows. May be involved in the stable assembly of several 4Fe-4S cluster-containing complexes of mitochondria. This Arabidopsis thaliana (Mouse-ear cress) protein is APO protein 3, mitochondrial (APO3).